Here is a 345-residue protein sequence, read N- to C-terminus: 3-dehydroquinate synthase (345 aa).

The protein belongs to the archaeal-type DHQ synthase family.

The catalysed reaction is 2-amino-2,3,7-trideoxy-D-lyxo-hept-6-ulosonate + NAD(+) + H2O = 3-dehydroquinate + NH4(+) + NADH + H(+). Functionally, catalyzes the oxidative deamination and cyclization of 2-amino-3,7-dideoxy-D-threo-hept-6-ulosonic acid (ADH) to yield 3-dehydroquinate (DHQ), which is fed into the canonical shikimic pathway of aromatic amino acid biosynthesis. The polypeptide is 3-dehydroquinate synthase (Methanocorpusculum labreanum (strain ATCC 43576 / DSM 4855 / Z)).